The following is a 391-amino-acid chain: 12-oxophytodienoate reductase 3 (391 aa).

Residue M1 is modified to N-acetylmethionine. T2 carries the post-translational modification N-acetylthreonine; in 12-oxophytodienoate reductase 3, N-terminally processed. Residues 31–33 (PMT), G64, and Q106 each bind FMN. Residue H186 coordinates substrate. The active-site Proton donor is the Y191. Position 238 (R238) interacts with FMN. Substrate is bound at residue R284. FMN is bound by residues 320–322 (SGG) and 343–344 (GR). A Microbody targeting signal motif is present at residues 389–391 (SRL).

This sequence belongs to the NADH:flavin oxidoreductase/NADH oxidase family. The cofactor is FMN. Expressed in green seedling, leaves, flowers (anthers, pistil, petal and stamen), and to a lower extent in roots and siliques. Specifically expressed in filament during anther dehiscence initiation.

The protein localises to the peroxisome. It catalyses the reaction (1S,2S)-OPC-8 + NADP(+) = (9S,13S,15Z)-12-oxophyto-10,15-dienoate + NADPH + H(+). Its pathway is lipid metabolism; oxylipin biosynthesis. Specifically cleaves olefinic bonds in cyclic enones. Involved in the biosynthesis of jasmonic acid (JA) and perhaps in biosynthesis or metabolism of other oxylipin signaling moleclules. Required for the spatial and temporal regulation of JA levels during dehiscence of anthers, promoting the stomium degeneration program. In vitro, reduces 9S,13S-12-oxophytodienoic acid (9S,13S-OPDA) and 9R,13R-OPDA to 9S,13S-OPC-8:0 and 9R,13R-OPC-8:0, respectively. Can detoxify the explosive 2,4,6-trinitrotoluene (TNT) in vitro by catalyzing its nitroreduction to form hydroxylamino-dinitrotoluene (HADNT). The protein is 12-oxophytodienoate reductase 3 of Arabidopsis thaliana (Mouse-ear cress).